Reading from the N-terminus, the 371-residue chain is Cytochrome b (371 aa).

The next 4 helical transmembrane spans lie at 25–45 (FGSMLLTCSMIQVLTGFFLAV), 69–90 (WMVQNLHAIGASMFFICIYIHI), 105–125 (WLSGTTLLIMLMATAFFGYVL), and 170–190 (FFALHFILPFGIISLSSLHVL). The heme b site is built by H75 and H89. The heme b site is built by H174 and H188. H193 is a binding site for a ubiquinone. 4 helical membrane-spanning segments follow: residues 218–238 (MKDLLMLTTTLTLLLMTISFF), 280–300 (LGGALALAMSIMILFTVPFIH), 312–332 (LMQLMFWTFTSTFVLITWAAT), and 339–358 (FISISQVASIIYFTFFISNP).

The protein belongs to the cytochrome b family. As to quaternary structure, the cytochrome bc1 complex contains 3 respiratory subunits (MT-CYB, CYC1 and UQCRFS1), 2 core proteins (UQCRC1 and UQCRC2) and probably 6 low-molecular weight proteins. It depends on heme b as a cofactor.

It is found in the mitochondrion inner membrane. Its function is as follows. Component of the ubiquinol-cytochrome c reductase complex (complex III or cytochrome b-c1 complex) that is part of the mitochondrial respiratory chain. The b-c1 complex mediates electron transfer from ubiquinol to cytochrome c. Contributes to the generation of a proton gradient across the mitochondrial membrane that is then used for ATP synthesis. In Boa constrictor (Boa), this protein is Cytochrome b (MT-CYB).